A 999-amino-acid polypeptide reads, in one-letter code: Receptor-like protein kinase 5 (999 aa).

Positions 1–14 are cleaved as a signal peptide; the sequence is MLYCLILLLCLSST. Residues 15-621 lie on the Extracellular side of the membrane; sequence YLPSLSLNQD…LCRKITRSKN (607 aa). 5 LRR repeats span residues 90–112, 115–137, 140–161, 164–186, and 188–208; these read SLHSLSLYNNSINGSLSADDFDT, NLISLDLSENLLVGSIPKSLPFN, NLKFLEISGNNLSDTIPSSFGE, KLESLNLAGNFLSGTIPASLGNV, and TLKELKLAYNLFSPSQIPSQL. N-linked (GlcNAc...) asparagine glycosylation is found at Asn98 and Asn102. 2 N-linked (GlcNAc...) asparagine glycosylation sites follow: Asn150 and Asn185. N-linked (GlcNAc...) asparagine glycosylation occurs at Asn210. 2 LRR repeats span residues 213–236 and 237–259; these read ELQVLWLAGCNLVGPIPPSLSRLT and SLVNLDLTFNQLTGSIPSWITQL. Asn269 and Asn282 each carry an N-linked (GlcNAc...) asparagine glycan. 12 LRR repeats span residues 285 to 307, 308 to 330, 332 to 353, 356 to 378, 380 to 402, 404 to 427, 428 to 450, 452 to 474, 500 to 523, 524 to 546, 548 to 569, and 571 to 593; these read TLKRFDASMNKLTGKIPDNLNLL, NLESLNLFENMLEGPLPESITRS, TLSELKLFNNRLTGVLPSQLGA, PLQYVDLSYNRFSGEIPANVCGE, KLEYLILIDNSFSGEISNNLGKC, SLTRVRLSNNKLSGQIPHGFWGLP, RLSLLELSDNSFTGSIPKTIIGA, NLSNLRISKNRFSGSIPNEIGSL, QLSRLDLSKNQLSGEIPRELRGWK, NLNELNLANNHLSGEIPKEVGIL, VLNYLDLSSNQFSGEIPLELQN, and KLNVLNLSYNHLSGKIPPLYANK. Asn452 carries an N-linked (GlcNAc...) asparagine glycan. An N-linked (GlcNAc...) asparagine glycan is attached at Asn576. The helical transmembrane segment at 622–641 threads the bilayer; it reads IGYVWILLTIFLLAGLVFVV. At 642-999 the chain is on the cytoplasmic side; sequence GIVMFIAKCR…PYYTEDLNSV (358 aa). The region spanning 683 to 968 is the Protein kinase domain; it reads LDEKNVIGFG…KVVIMLQEVS (286 aa). ATP is bound by residues 689–697 and Lys711; that span reads IGFGSSGKV. Residues Tyr766 and Tyr806 each carry the phosphotyrosine modification. Asp819 acts as the Proton acceptor in catalysis. At Ser856 the chain carries Phosphoserine. Phosphotyrosine occurs at positions 864 and 871. At Thr872 the chain carries Phosphothreonine. Positions 972–999 are disordered; sequence PCSSPNTSKRSKTGGKLSPYYTEDLNSV.

Belongs to the protein kinase superfamily. Ser/Thr protein kinase family. As to quaternary structure, interacts with CST. Binds to IDA. Mg(2+) is required as a cofactor. It depends on Mn(2+) as a cofactor. In terms of processing, autophosphorylated on Ser, Thr and Tyr residues. Expressed in roots and rosettes. Expressed at the base of petioles and pedicels, and in the abscission zones of the floral organs.

It is found in the cell membrane. The catalysed reaction is L-seryl-[protein] + ATP = O-phospho-L-seryl-[protein] + ADP + H(+). The enzyme catalyses L-threonyl-[protein] + ATP = O-phospho-L-threonyl-[protein] + ADP + H(+). It carries out the reaction L-tyrosyl-[protein] + ATP = O-phospho-L-tyrosyl-[protein] + ADP + H(+). Functionally, receptor with a dual specificity kinase activity acting on both serine/threonine- and tyrosine-containing substrates that controls floral organ abscission. May interact with the 'INFLORESCENCE DEFICIENT IN ABSCISSION' (IDA) ligands family. The sequence is that of Receptor-like protein kinase 5 (RLK5) from Arabidopsis thaliana (Mouse-ear cress).